We begin with the raw amino-acid sequence, 177 residues long: Translation initiation factor IF-3 (177 aa).

It belongs to the IF-3 family. In terms of assembly, monomer.

It is found in the cytoplasm. IF-3 binds to the 30S ribosomal subunit and shifts the equilibrium between 70S ribosomes and their 50S and 30S subunits in favor of the free subunits, thus enhancing the availability of 30S subunits on which protein synthesis initiation begins. This Rhizobium meliloti (strain 1021) (Ensifer meliloti) protein is Translation initiation factor IF-3.